Consider the following 263-residue polypeptide: MKIAVTGKGGVGKSTIVGMLARALSDEGWRVMAIDADPDANLASAIGVPAERLSALLPISKMTGLARERTGASETTGTHFILNPRVDDIPEQFCVDHAGIKLLLMGTVNHAGSGCVCPEHALVRTLLRHILTKRKECVLIDMEAGIEHFGRGTIEAVDLLVIVIEPGSRSLQTAAQIEGLARDLGIKTICHIANKLASPVDVGFILDRADQFDLLGSIPFDSAIQAADQAGLSCYDLSPACRDKAHALMAALLERVGPTQGVS.

Gly-7–Ser-14 lines the ATP pocket.

In terms of biological role, involved in the insertion of nickel into the carbon monoxide dehydrogenase (CODH). The chain is Carbon monoxide dehydrogenase accessory protein CooC (cooC) from Rhodospirillum rubrum.